A 101-amino-acid chain; its full sequence is Phosphoribosyl-AMP cyclohydrolase (101 aa).

Position 71 (aspartate 71) interacts with Mg(2+). Cysteine 72 is a binding site for Zn(2+). Mg(2+) contacts are provided by aspartate 73 and aspartate 75. The Zn(2+) site is built by cysteine 88 and cysteine 95.

Belongs to the PRA-CH family. As to quaternary structure, homodimer. It depends on Mg(2+) as a cofactor. Zn(2+) is required as a cofactor.

Its subcellular location is the cytoplasm. The enzyme catalyses 1-(5-phospho-beta-D-ribosyl)-5'-AMP + H2O = 1-(5-phospho-beta-D-ribosyl)-5-[(5-phospho-beta-D-ribosylamino)methylideneamino]imidazole-4-carboxamide. It functions in the pathway amino-acid biosynthesis; L-histidine biosynthesis; L-histidine from 5-phospho-alpha-D-ribose 1-diphosphate: step 3/9. Catalyzes the hydrolysis of the adenine ring of phosphoribosyl-AMP. The chain is Phosphoribosyl-AMP cyclohydrolase from Bacillus cereus (strain G9842).